Consider the following 313-residue polypeptide: Aspartate carbamoyltransferase catalytic subunit (313 aa).

Carbamoyl phosphate is bound by residues Arg59 and Thr60. Lys87 contacts L-aspartate. Carbamoyl phosphate contacts are provided by Arg109, His137, and Gln140. L-aspartate is bound by residues Arg170 and Arg224. 2 residues coordinate carbamoyl phosphate: Gly265 and Pro266.

It belongs to the aspartate/ornithine carbamoyltransferase superfamily. ATCase family. In terms of assembly, heterododecamer (2C3:3R2) of six catalytic PyrB chains organized as two trimers (C3), and six regulatory PyrI chains organized as three dimers (R2).

The enzyme catalyses carbamoyl phosphate + L-aspartate = N-carbamoyl-L-aspartate + phosphate + H(+). It functions in the pathway pyrimidine metabolism; UMP biosynthesis via de novo pathway; (S)-dihydroorotate from bicarbonate: step 2/3. Functionally, catalyzes the condensation of carbamoyl phosphate and aspartate to form carbamoyl aspartate and inorganic phosphate, the committed step in the de novo pyrimidine nucleotide biosynthesis pathway. This is Aspartate carbamoyltransferase catalytic subunit from Rhizobium meliloti (strain 1021) (Ensifer meliloti).